The chain runs to 198 residues: Nucleoid occlusion factor SlmA (198 aa).

One can recognise an HTH tetR-type domain in the interval 10–70 (NRREEILQSL…SLIEFIEDSL (61 aa)). Residues 33 to 52 (TTAKLAASVGVSEAALYRHF) constitute a DNA-binding region (H-T-H motif). The stretch at 117–144 (EQDRLQGRINQLFERIEAQLRQVLREKR) forms a coiled coil.

This sequence belongs to the nucleoid occlusion factor SlmA family. Homodimer. Interacts with FtsZ.

It is found in the cytoplasm. The protein localises to the nucleoid. Functionally, required for nucleoid occlusion (NO) phenomenon, which prevents Z-ring formation and cell division over the nucleoid. Acts as a DNA-associated cell division inhibitor that binds simultaneously chromosomal DNA and FtsZ, and disrupts the assembly of FtsZ polymers. SlmA-DNA-binding sequences (SBS) are dispersed on non-Ter regions of the chromosome, preventing FtsZ polymerization at these regions. This Citrobacter koseri (strain ATCC BAA-895 / CDC 4225-83 / SGSC4696) protein is Nucleoid occlusion factor SlmA.